Here is a 592-residue protein sequence, read N- to C-terminus: Testis-specific serine kinase substrate (592 aa).

Ser217 is subject to Phosphoserine. Positions 232–308 are disordered; sequence QDETPRRQEA…VPAGWGMGPR (77 aa). The segment covering 234–264 has biased composition (basic and acidic residues); sequence ETPRRQEAELQEPEEKQEPEEKQEPEEKQKP. A compositionally biased stretch (polar residues) spans 269–281; it reads SWNSLGPAATSQG. Ser288 is modified (phosphoserine; by TSSK1 and TSSK2). Ser316 carries the phosphoserine modification. A disordered region spans residues 566–592; the sequence is LEGSTGTMGGGSSAGTPPKQGGSAPEQ.

In terms of processing, phosphorylated on serine residue(s) by STK22A/TSSK1 and STK22B/TSSK2. Highly expressed in testis. Expressed at low levels in prostate, female breast, placenta, ovary and thymus.

The protein localises to the cytoplasm. It is found in the cytoskeleton. The protein resides in the microtubule organizing center. It localises to the centrosome. Its subcellular location is the centriole. In terms of biological role, may play a role in testicular physiology, most probably in the process of spermatogenesis or spermatid development. The chain is Testis-specific serine kinase substrate (TSKS) from Homo sapiens (Human).